The following is a 204-amino-acid chain: Tat proofreading chaperone DmsD (204 aa).

This sequence belongs to the TorD/DmsD family. DmsD subfamily. As to quaternary structure, monomer in solution.

Functionally, required for biogenesis/assembly of DMSO reductase, but not for the interaction of the DmsA signal peptide with the Tat system. May be part of a chaperone cascade complex that facilitates a folding-maturation pathway for the substrate protein. This is Tat proofreading chaperone DmsD from Salmonella typhimurium (strain LT2 / SGSC1412 / ATCC 700720).